The primary structure comprises 186 residues: TATA-box-binding protein 2 (186 aa).

2 tandem repeats follow at residues 10–86 (IQNV…FDKL) and 101–179 (VQNI…VERI). Glycyl lysine isopeptide (Lys-Gly) (interchain with G-Cter in SAMP2) cross-links involve residues Lys-53 and Lys-63.

The protein belongs to the TBP family.

Its function is as follows. General factor that plays a role in the activation of archaeal genes transcribed by RNA polymerase. Binds specifically to the TATA box promoter element which lies close to the position of transcription initiation. This chain is TATA-box-binding protein 2 (tbp2), found in Haloferax volcanii (strain ATCC 29605 / DSM 3757 / JCM 8879 / NBRC 14742 / NCIMB 2012 / VKM B-1768 / DS2) (Halobacterium volcanii).